A 308-amino-acid polypeptide reads, in one-letter code: UDP-N-acetylenolpyruvoylglucosamine reductase (308 aa).

Residues 24–187 form the FAD-binding PCMH-type domain; sequence RVGGPADWLF…VSASLQGVPG (164 aa). The active site involves R167. A disordered region spans residues 199–230; sequence QLDKRDQTQPTKERSAGSTFRNPAGFSSTGRA. Residues 200-213 show a composition bias toward basic and acidic residues; the sequence is LDKRDQTQPTKERS. The segment covering 214-228 has biased composition (polar residues); that stretch reads AGSTFRNPAGFSSTG. The Proton donor role is filled by S216. The active site involves E298.

Belongs to the MurB family. FAD serves as cofactor.

The protein localises to the cytoplasm. The enzyme catalyses UDP-N-acetyl-alpha-D-muramate + NADP(+) = UDP-N-acetyl-3-O-(1-carboxyvinyl)-alpha-D-glucosamine + NADPH + H(+). Its pathway is cell wall biogenesis; peptidoglycan biosynthesis. In terms of biological role, cell wall formation. The sequence is that of UDP-N-acetylenolpyruvoylglucosamine reductase from Ruegeria pomeroyi (strain ATCC 700808 / DSM 15171 / DSS-3) (Silicibacter pomeroyi).